The sequence spans 377 residues: Queuine tRNA-ribosyltransferase (377 aa).

The active-site Proton acceptor is D94. Residues 94-98, D148, Q191, and G218 contribute to the substrate site; that span reads DSGGF. The tract at residues 249–255 is RNA binding; the sequence is GVGTPDD. The active-site Nucleophile is D268. The segment at 273–277 is RNA binding; important for wobble base 34 recognition; sequence TRAGR.

It belongs to the queuine tRNA-ribosyltransferase family. In terms of assembly, homodimer. Within each dimer, one monomer is responsible for RNA recognition and catalysis, while the other monomer binds to the replacement base PreQ1.

It carries out the reaction 7-aminomethyl-7-carbaguanine + guanosine(34) in tRNA = 7-aminomethyl-7-carbaguanosine(34) in tRNA + guanine. Its pathway is tRNA modification; tRNA-queuosine biosynthesis. Its function is as follows. Catalyzes the base-exchange of a guanine (G) residue with the queuine precursor 7-aminomethyl-7-deazaguanine (PreQ1) at position 34 (anticodon wobble position) in tRNAs with GU(N) anticodons (tRNA-Asp, -Asn, -His and -Tyr). Catalysis occurs through a double-displacement mechanism. The nucleophile active site attacks the C1' of nucleotide 34 to detach the guanine base from the RNA, forming a covalent enzyme-RNA intermediate. The proton acceptor active site deprotonates the incoming PreQ1, allowing a nucleophilic attack on the C1' of the ribose to form the product. After dissociation, two additional enzymatic reactions on the tRNA convert PreQ1 to queuine (Q), resulting in the hypermodified nucleoside queuosine (7-(((4,5-cis-dihydroxy-2-cyclopenten-1-yl)amino)methyl)-7-deazaguanosine). This Brucella suis biovar 1 (strain 1330) protein is Queuine tRNA-ribosyltransferase.